The primary structure comprises 354 residues: Probable alcohol acetyltransferase (354 aa).

Active-site charge relay system residues include Ser-124 and His-293.

It belongs to the AB hydrolase superfamily.

Functionally, probable alcohol acetyltransferase that uses acetyl-CoA to synthesize acetate esters from various alcohols. Not involved in the synthesis of ethyl acetate. The chain is Probable alcohol acetyltransferase (EAT2) from Cyberlindnera jadinii (strain ATCC 18201 / CBS 1600 / BCRC 20928 / JCM 3617 / NBRC 0987 / NRRL Y-1542) (Torula yeast).